The primary structure comprises 444 residues: Pentatricopeptide repeat-containing protein At4g35850, mitochondrial (444 aa).

The N-terminal 25 residues, 1-25 (MKFLMQSISGRNRSLVRALVSRRYF), are a transit peptide targeting the mitochondrion. 6 PPR repeats span residues 40-74 (DLSE…GVQP), 75-109 (TADI…GIAP), 110-144 (DVNL…DVKP), 145-179 (NGQT…GVGL), 255-289 (NLTV…GKDT), and 290-325 (DTYC…KIPA).

The protein belongs to the PPR family. P subfamily.

It localises to the mitochondrion. The polypeptide is Pentatricopeptide repeat-containing protein At4g35850, mitochondrial (Arabidopsis thaliana (Mouse-ear cress)).